The chain runs to 223 residues: Cytidylate kinase (223 aa).

The segment at Met1–Arg23 is disordered. Gly12–Ser20 lines the ATP pocket.

It belongs to the cytidylate kinase family. Type 1 subfamily.

It is found in the cytoplasm. It carries out the reaction CMP + ATP = CDP + ADP. The enzyme catalyses dCMP + ATP = dCDP + ADP. This chain is Cytidylate kinase, found in Cutibacterium acnes (strain DSM 16379 / KPA171202) (Propionibacterium acnes).